Consider the following 63-residue polypeptide: MAIKPAYVKKTGTLLMERYPDAFGADFEHNKDVVEELTNIESKGVRNRIAGYVTRKMNNPVEA.

Belongs to the eukaryotic ribosomal protein eS17 family.

This is Small ribosomal subunit protein eS17 (rps17e) from Haloarcula marismortui (strain ATCC 43049 / DSM 3752 / JCM 8966 / VKM B-1809) (Halobacterium marismortui).